Consider the following 368-residue polypeptide: MSVAGLKKQFYKASQLVSEKVGGAEGTKLDDDFKEMEKKVDVTSKAVTEVLARTIEYLQPNPASRAKLTMLNTVSKIRGQVKNPGYPQSEGLLGECMIRHGKELGGESNFGDALLDAGESMKRLAEVKDSLDIEVKQNFIDPLQNLCDKDLKEIQHHLKKLEGRRLDFDYKKKRQGKIPDEELRQAMEKFEESKEVAETSMHHLLETDIEQVSQLSALVDAQLDYHRQAVQILDELADKLKRRMREASSRPKREYKPKPRELLDLGEPEQSNGGFPCAAAPKITASSSFRSSDKPVRTPSRSMPPLDQPSCKALYDFEPENDGELGFHEGDIITLTNQIDENWYEGMLDGQSGFFPLSYVEVLVPLPQ.

The segment at 1–21 (MSVAGLKKQFYKASQLVSEKV) is membrane-binding amphipathic helix. One can recognise a BAR domain in the interval 18 to 249 (SEKVGGAEGT…LKRRMREASS (232 aa)). The interval 60-87 (PNPASRAKLTMLNTVSKIRGQVKNPGYP) is required for dimerization upon membrane association. Residues 181-250 (EELRQAMEKF…KRRMREASSR (70 aa)) adopt a coiled-coil conformation. The segment at 218 to 254 (LVDAQLDYHRQAVQILDELADKLKRRMREASSRPKRE) is interaction with ARC. The segment at 243 to 308 (RMREASSRPK…PSRSMPPLDQ (66 aa)) is disordered. The span at 245–263 (REASSRPKREYKPKPRELL) shows a compositional bias: basic and acidic residues. Phosphoserine occurs at positions 288 and 292. Threonine 298 is modified (phosphothreonine). The 60-residue stretch at 306–365 (LDQPSCKALYDFEPENDGELGFHEGDIITLTNQIDENWYEGMLDGQSGFFPLSYVEVLVP) folds into the SH3 domain. Tyrosine 315 carries the phosphotyrosine modification.

This sequence belongs to the endophilin family. In terms of assembly, interacts with ARC, SYNJ1 and DNM1. Interacts with PDCD6IP. Interacts with BIN2.

It localises to the cytoplasm. It is found in the early endosome membrane. Its subcellular location is the cell projection. The protein resides in the podosome. Implicated in endocytosis. May recruit other proteins to membranes with high curvature. This is Endophilin-A2 from Bos taurus (Bovine).